A 625-amino-acid polypeptide reads, in one-letter code: MKYLAGDFDVVVIGAGHAGCEAALASARMGCKTLICTMNLDSIALMACNPNIGGTAKGHLVREIDALGGEMGINIDHTFIQSRMLNTSKGPAVHSLRAQADKKRYSERMKHLLEKEENVVLRQLEVIEIDVEDNEVKGVLTKNGAYFTTKAIILCTGTYLKGKIIIGDIIYSSGPSGLYPANDLSQSLLDLGINLRRFKTGTPARINKRSVDFSKMVEQPGDEKIVPFSFIHDKLDKDQISCYLTYTSEETHKIIHENIHRSPLYNGSIEGIGPRYCPSIEDKIVRFPDKDKHQIFIEPEGENTEELYVGGMSSSLPEDVQIKMYRSVPGLENAEILRTAYAIEYDCIDPQQLDLTLEFKNINGLYGAGQFNGSSGYEEAAAQGLVAGINAVLKIKGKDPLILKRSDAYIGVLIDDLVTKGTNEPYRMMTSRAEYRLLLRQDNADLRLTEMGYRIGLVKEDRYNKYLNRKKNVENEIERIKKVQITGKKEINEFLLEKGSTELKKPISLYELIKRPELDYFKVEPLDDKRPNLSDDEKEEINIIAKYEGYINKQLEQVEQFKKYENRLIPKSINYSDIKGLRIEAIQKLEKIKPINIGQASRISGVSPADISVLLIYMERKNREN.

14–19 (GAGHAG) contributes to the FAD binding site. 273 to 287 (GPRYCPSIEDKIVRF) contacts NAD(+).

Belongs to the MnmG family. In terms of assembly, homodimer. Heterotetramer of two MnmE and two MnmG subunits. The cofactor is FAD.

The protein localises to the cytoplasm. Functionally, NAD-binding protein involved in the addition of a carboxymethylaminomethyl (cmnm) group at the wobble position (U34) of certain tRNAs, forming tRNA-cmnm(5)s(2)U34. This chain is tRNA uridine 5-carboxymethylaminomethyl modification enzyme MnmG, found in Clostridium botulinum (strain Loch Maree / Type A3).